A 490-amino-acid chain; its full sequence is Aspartyl/glutamyl-tRNA(Asn/Gln) amidotransferase subunit B (490 aa).

The protein belongs to the GatB/GatE family. GatB subfamily. As to quaternary structure, heterotrimer of A, B and C subunits.

The catalysed reaction is L-glutamyl-tRNA(Gln) + L-glutamine + ATP + H2O = L-glutaminyl-tRNA(Gln) + L-glutamate + ADP + phosphate + H(+). The enzyme catalyses L-aspartyl-tRNA(Asn) + L-glutamine + ATP + H2O = L-asparaginyl-tRNA(Asn) + L-glutamate + ADP + phosphate + 2 H(+). In terms of biological role, allows the formation of correctly charged Asn-tRNA(Asn) or Gln-tRNA(Gln) through the transamidation of misacylated Asp-tRNA(Asn) or Glu-tRNA(Gln) in organisms which lack either or both of asparaginyl-tRNA or glutaminyl-tRNA synthetases. The reaction takes place in the presence of glutamine and ATP through an activated phospho-Asp-tRNA(Asn) or phospho-Glu-tRNA(Gln). This chain is Aspartyl/glutamyl-tRNA(Asn/Gln) amidotransferase subunit B, found in Methylorubrum populi (strain ATCC BAA-705 / NCIMB 13946 / BJ001) (Methylobacterium populi).